The following is a 239-amino-acid chain: 7-cyano-7-deazaguanine synthase (239 aa).

8 to 18 (FSGGLDSTASL) is a binding site for ATP. Zn(2+) is bound by residues Cys194, Cys209, Cys212, and Cys215.

The protein belongs to the QueC family.

It catalyses the reaction 7-carboxy-7-deazaguanine + NH4(+) + ATP = 7-cyano-7-deazaguanine + ADP + phosphate + H2O + H(+). It participates in purine metabolism; 7-cyano-7-deazaguanine biosynthesis. Catalyzes the ATP-dependent conversion of 7-carboxy-7-deazaguanine (CDG) to 7-cyano-7-deazaguanine (preQ(0)). This Pyrococcus abyssi (strain GE5 / Orsay) protein is 7-cyano-7-deazaguanine synthase.